The primary structure comprises 477 residues: Alkaline phosphatase (477 aa).

Aspartate 44 contacts Mg(2+). Aspartate 44 serves as a coordination point for Zn(2+). Residue serine 94 is the Phosphoserine intermediate of the active site. A glycan (N-linked (GlcNAc...) asparagine) is linked at asparagine 124. Residues histidine 155 and threonine 157 each contribute to the Mg(2+) site. A disulfide bridge links cysteine 165 with cysteine 185. N-linked (GlcNAc...) asparagine glycosylation occurs at asparagine 214. Glutamate 315 is a binding site for Mg(2+). Zn(2+)-binding residues include aspartate 320, histidine 324, aspartate 361, and histidine 362. The N-linked (GlcNAc...) asparagine glycan is linked to asparagine 413. Histidine 437 provides a ligand contact to Zn(2+).

In terms of assembly, homodimer. Mg(2+) is required as a cofactor. It depends on Zn(2+) as a cofactor.

It is found in the cell membrane. The catalysed reaction is a phosphate monoester + H2O = an alcohol + phosphate. The polypeptide is Alkaline phosphatase (Gadus morhua (Atlantic cod)).